A 193-amino-acid chain; its full sequence is Peptidyl-tRNA hydrolase (193 aa).

Tyr-21 provides a ligand contact to tRNA. His-26 serves as the catalytic Proton acceptor. TRNA-binding residues include Tyr-72, Asn-74, and Asn-120.

This sequence belongs to the PTH family. Monomer.

The protein localises to the cytoplasm. It carries out the reaction an N-acyl-L-alpha-aminoacyl-tRNA + H2O = an N-acyl-L-amino acid + a tRNA + H(+). In terms of biological role, hydrolyzes ribosome-free peptidyl-tRNAs (with 1 or more amino acids incorporated), which drop off the ribosome during protein synthesis, or as a result of ribosome stalling. Its function is as follows. Catalyzes the release of premature peptidyl moieties from peptidyl-tRNA molecules trapped in stalled 50S ribosomal subunits, and thus maintains levels of free tRNAs and 50S ribosomes. The protein is Peptidyl-tRNA hydrolase of Nocardia farcinica (strain IFM 10152).